A 338-amino-acid chain; its full sequence is tRNA N6-adenosine threonylcarbamoyltransferase (338 aa).

Positions 110 and 114 each coordinate Fe cation. Substrate-binding positions include 132–136 (VLSGG), Asp-165, Gly-178, and Asn-274. Residue Asp-298 coordinates Fe cation.

The protein belongs to the KAE1 / TsaD family. It depends on Fe(2+) as a cofactor.

Its subcellular location is the cytoplasm. It catalyses the reaction L-threonylcarbamoyladenylate + adenosine(37) in tRNA = N(6)-L-threonylcarbamoyladenosine(37) in tRNA + AMP + H(+). Functionally, required for the formation of a threonylcarbamoyl group on adenosine at position 37 (t(6)A37) in tRNAs that read codons beginning with adenine. Is involved in the transfer of the threonylcarbamoyl moiety of threonylcarbamoyl-AMP (TC-AMP) to the N6 group of A37, together with TsaE and TsaB. TsaD likely plays a direct catalytic role in this reaction. The protein is tRNA N6-adenosine threonylcarbamoyltransferase of Borrelia duttonii (strain Ly).